Reading from the N-terminus, the 307-residue chain is Porphobilinogen deaminase (307 aa).

S-(dipyrrolylmethanemethyl)cysteine is present on cysteine 239.

It belongs to the HMBS family. In terms of assembly, monomer. Dipyrromethane is required as a cofactor.

It catalyses the reaction 4 porphobilinogen + H2O = hydroxymethylbilane + 4 NH4(+). Its pathway is porphyrin-containing compound metabolism; protoporphyrin-IX biosynthesis; coproporphyrinogen-III from 5-aminolevulinate: step 2/4. Functionally, tetrapolymerization of the monopyrrole PBG into the hydroxymethylbilane pre-uroporphyrinogen in several discrete steps. The sequence is that of Porphobilinogen deaminase from Campylobacter jejuni subsp. jejuni serotype O:6 (strain 81116 / NCTC 11828).